The chain runs to 491 residues: Homeobox protein unplugged (491 aa).

Disordered regions lie at residues 1-23, 46-69, 124-146, and 227-329; these read MERP…TKTT, SASA…QEQE, AGKE…PLPH, and FSPA…RRTA. Over residues 254-264 the composition is skewed to polar residues; that stretch reads GDSSSDISLTL. Over residues 305 to 316 the composition is skewed to gly residues; that stretch reads GLGGKDSQGNGS. Residues 323–382 constitute a DNA-binding region (homeobox); that stretch reads SRRRRTAFTSEQLLELEREFHAKKYLSLTERSQIATSLKLSEVQVKIWFQNRRAKWKRVK.

The protein resides in the nucleus. Plays a regulatory role in neural branching of the tracheae: segment-specific aspects of these neural branching patterns appear to be generated by homeotic regulation of expression. The sequence is that of Homeobox protein unplugged from Drosophila pseudoobscura pseudoobscura (Fruit fly).